Consider the following 454-residue polypeptide: uncharacterized protein (454 aa).

[4Fe-4S] cluster is bound by residues C73, C79, C82, and C154. S-adenosyl-L-methionine is bound by residues Q279, F307, D328, and D381. C408 functions as the Nucleophile in the catalytic mechanism.

The protein belongs to the class I-like SAM-binding methyltransferase superfamily. RNA M5U methyltransferase family.

This is an uncharacterized protein from Leptospira interrogans serogroup Icterohaemorrhagiae serovar Lai (strain 56601).